The sequence spans 99 residues: U11-barytoxin-Tl1a (99 aa).

Positions 1–21 (MKTLVLVAVLGLASLYLLSYA) are cleaved as a signal peptide. The propeptide occupies 22–50 (SEVQQISRDEEDFRALMASFGGIFDTEER). Cystine bridges form between cysteine 57-cysteine 71, cysteine 64-cysteine 76, and cysteine 70-cysteine 90.

Belongs to the neurotoxin 10 (Hwtx-1) family. 25 (ICK4) subfamily. As to expression, expressed by the venom gland.

The protein localises to the secreted. Ion channel inhibitor. In Trittame loki (Brush-footed trapdoor spider), this protein is U11-barytoxin-Tl1a.